We begin with the raw amino-acid sequence, 309 residues long: Probable ABC transporter permease protein YesP (309 aa).

Transmembrane regions (helical) follow at residues 29–49 (FIIG…FLSF), 84–104 (FTYV…IAVI), 114–134 (IYRT…VAIM), 167–187 (ALWT…LIFL), 217–237 (LPIL…SAFM), and 275–295 (YASA…LILF). Positions 80–294 (LKVTFTYVLA…VIVGLITLIL (215 aa)) constitute an ABC transmembrane type-1 domain.

Belongs to the binding-protein-dependent transport system permease family. MalFG subfamily.

It localises to the cell membrane. Functionally, part of a binding-protein-dependent transport system. Probably responsible for the translocation of the substrate across the membrane. This Bacillus subtilis (strain 168) protein is Probable ABC transporter permease protein YesP (yesP).